A 250-amino-acid polypeptide reads, in one-letter code: 3-deoxy-manno-octulosonate cytidylyltransferase (250 aa).

Belongs to the KdsB family.

The protein resides in the cytoplasm. It catalyses the reaction 3-deoxy-alpha-D-manno-oct-2-ulosonate + CTP = CMP-3-deoxy-beta-D-manno-octulosonate + diphosphate. It participates in nucleotide-sugar biosynthesis; CMP-3-deoxy-D-manno-octulosonate biosynthesis; CMP-3-deoxy-D-manno-octulosonate from 3-deoxy-D-manno-octulosonate and CTP: step 1/1. Its pathway is bacterial outer membrane biogenesis; lipopolysaccharide biosynthesis. Activates KDO (a required 8-carbon sugar) for incorporation into bacterial lipopolysaccharide in Gram-negative bacteria. This Francisella tularensis subsp. holarctica (strain LVS) protein is 3-deoxy-manno-octulosonate cytidylyltransferase.